Consider the following 319-residue polypeptide: Aspartate carbamoyltransferase catalytic subunit (319 aa).

Carbamoyl phosphate contacts are provided by Arg59 and Thr60. L-aspartate is bound at residue Lys87. Arg109, His137, and Gln140 together coordinate carbamoyl phosphate. L-aspartate is bound by residues Arg170 and Arg224. Residues Gly265 and Pro266 each coordinate carbamoyl phosphate.

Belongs to the aspartate/ornithine carbamoyltransferase superfamily. ATCase family. In terms of assembly, heterododecamer (2C3:3R2) of six catalytic PyrB chains organized as two trimers (C3), and six regulatory PyrI chains organized as three dimers (R2).

It catalyses the reaction carbamoyl phosphate + L-aspartate = N-carbamoyl-L-aspartate + phosphate + H(+). It participates in pyrimidine metabolism; UMP biosynthesis via de novo pathway; (S)-dihydroorotate from bicarbonate: step 2/3. In terms of biological role, catalyzes the condensation of carbamoyl phosphate and aspartate to form carbamoyl aspartate and inorganic phosphate, the committed step in the de novo pyrimidine nucleotide biosynthesis pathway. This chain is Aspartate carbamoyltransferase catalytic subunit, found in Gemmatimonas aurantiaca (strain DSM 14586 / JCM 11422 / NBRC 100505 / T-27).